Reading from the N-terminus, the 437-residue chain is Cytochrome b (437 aa).

A helical transmembrane segment spans residues 45–65; the sequence is WIWGIVLAFTLVLQIVTGIVL. Positions 97 and 111 each coordinate heme b. 9 helical membrane-spanning segments follow: residues 100-120, 129-149, 156-176, 194-214, 248-268, 298-318, 330-350, 365-385, and 391-411; these read GASLFFLAVYIHIFRGLYYGS, WIVGMVIYLLMMGTAFMGYVL, FWGATVITGLFGAIPGIGPSI, FFSLHYLLPFVIAALVAIHIW, FVIKDLFALALVLLGFFAVVA, FLPFYAILRAFAADVWVVILV, FFGVIAMFGAIAVMALAPWLD, MWFWFLVLDFVVLTWVGAMPT, and WISLIASTYWFAYFLVILPLL. Heme b-binding residues include His-198 and His-212.

The protein belongs to the cytochrome b family. The main subunits of complex b-c1 are: cytochrome b, cytochrome c1 and the Rieske protein. The cofactor is heme b.

It is found in the cell membrane. Its function is as follows. Component of the ubiquinol-cytochrome c reductase complex (complex III or cytochrome b-c1 complex), which is a respiratory chain that generates an electrochemical potential coupled to ATP synthesis. In Rhodobacter capsulatus (strain ATCC BAA-309 / NBRC 16581 / SB1003), this protein is Cytochrome b (petB).